The primary structure comprises 287 residues: Probable endonuclease LCL3 (287 aa).

The disordered stretch occupies residues 1–40; the sequence is MPWPFGPSGSSEAPPPQKPRDDKVEGREPAKSWNSLLPKP. Residues 18 to 30 are compositionally biased toward basic and acidic residues; the sequence is KPRDDKVEGREPA. A helical transmembrane segment spans residues 50–67; that stretch reads WAPVFLTAVGSLAAFMFY. The region spanning 88–246 is the TNase-like domain; sequence RSLLGRVTSV…KAKKLGLWSI (159 aa). Arg-137 is an active-site residue. Asp-142 is a binding site for Ca(2+). Residues Glu-145 and Arg-185 contribute to the active site. Residues 254-272 show a composition bias toward basic and acidic residues; the sequence is PRDFKNRTQGNEKSERDVE. The interval 254 to 278 is disordered; sequence PRDFKNRTQGNEKSERDVEGSTVQK.

The protein belongs to the LCL3 family.

It is found in the mitochondrion. The protein localises to the membrane. This is Probable endonuclease LCL3 (LCL3) from Verticillium alfalfae (strain VaMs.102 / ATCC MYA-4576 / FGSC 10136) (Verticillium wilt of alfalfa).